A 382-amino-acid chain; its full sequence is Acetylornithine deacetylase (382 aa).

His-79 contacts Zn(2+). Residue Asp-81 is part of the active site. Residue Asp-111 coordinates Zn(2+). The active site involves Glu-143. Zn(2+) contacts are provided by Glu-144, Glu-168, and His-354.

The protein belongs to the peptidase M20A family. ArgE subfamily. Homodimer. Zn(2+) serves as cofactor. The cofactor is Co(2+). It depends on glutathione as a cofactor.

The protein localises to the cytoplasm. It carries out the reaction N(2)-acetyl-L-ornithine + H2O = L-ornithine + acetate. It functions in the pathway amino-acid biosynthesis; L-arginine biosynthesis; L-ornithine from N(2)-acetyl-L-ornithine (linear): step 1/1. In terms of biological role, catalyzes the hydrolysis of the amide bond of N(2)-acetylated L-amino acids. Cleaves the acetyl group from N-acetyl-L-ornithine to form L-ornithine, an intermediate in L-arginine biosynthesis pathway, and a branchpoint in the synthesis of polyamines. In Pasteurella multocida (strain Pm70), this protein is Acetylornithine deacetylase.